The sequence spans 349 residues: Phosphoribosylformylglycinamidine cyclo-ligase (349 aa).

The protein belongs to the AIR synthase family.

It is found in the cytoplasm. The enzyme catalyses 2-formamido-N(1)-(5-O-phospho-beta-D-ribosyl)acetamidine + ATP = 5-amino-1-(5-phospho-beta-D-ribosyl)imidazole + ADP + phosphate + H(+). Its pathway is purine metabolism; IMP biosynthesis via de novo pathway; 5-amino-1-(5-phospho-D-ribosyl)imidazole from N(2)-formyl-N(1)-(5-phospho-D-ribosyl)glycinamide: step 2/2. The polypeptide is Phosphoribosylformylglycinamidine cyclo-ligase (Bordetella pertussis (strain Tohama I / ATCC BAA-589 / NCTC 13251)).